Reading from the N-terminus, the 347-residue chain is 4-hydroxy-2-oxovalerate aldolase (347 aa).

Residues 2 to 252 enclose the Pyruvate carboxyltransferase domain; sequence ILISDATLRD…DTRTTFERVM (251 aa). Residue 10 to 11 participates in substrate binding; that stretch reads RD. Position 11 (Asp-11) interacts with Mn(2+). The Proton acceptor role is filled by His-14. Substrate contacts are provided by Ser-164 and His-191. His-191 and His-193 together coordinate Mn(2+).

It belongs to the 4-hydroxy-2-oxovalerate aldolase family.

It catalyses the reaction (S)-4-hydroxy-2-oxopentanoate = acetaldehyde + pyruvate. In Burkholderia pseudomallei (strain K96243), this protein is 4-hydroxy-2-oxovalerate aldolase (mhpE).